A 740-amino-acid polypeptide reads, in one-letter code: Ion-translocating oxidoreductase complex subunit C (740 aa).

2 consecutive 4Fe-4S ferredoxin-type domains span residues 369–397 (GEPQ…QQLY) and 407–436 (KATT…VQYF). Residues Cys-377, Cys-380, Cys-383, Cys-387, Cys-416, Cys-419, Cys-422, and Cys-426 each contribute to the [4Fe-4S] cluster site. Disordered regions lie at residues 602-621 (KLEQ…PRKA) and 660-718 (ARAK…RKAA). The span at 611 to 621 (KPEEQVDPRKA) shows a compositional bias: basic and acidic residues.

The protein belongs to the 4Fe4S bacterial-type ferredoxin family. RnfC subfamily. In terms of assembly, the complex is composed of six subunits: RsxA, RsxB, RsxC, RsxD, RsxE and RsxG. [4Fe-4S] cluster serves as cofactor.

It localises to the cell inner membrane. Functionally, part of a membrane-bound complex that couples electron transfer with translocation of ions across the membrane. Required to maintain the reduced state of SoxR. The chain is Ion-translocating oxidoreductase complex subunit C from Escherichia coli O9:H4 (strain HS).